The primary structure comprises 399 residues: Integral membrane protein GPR137B (399 aa).

Residues 1 to 22 (MRPERPRPRGSAPGPMETPPWD) are disordered. The Lumenal segment spans residues 1 to 46 (MRPERPRPRGSAPGPMETPPWDPARNDSLPPTLTPAVPPYVKLGLT). N-linked (GlcNAc...) asparagine glycosylation is present at asparagine 26. The chain crosses the membrane as a helical span at residues 47 to 67 (VVYTVFYALLFVFIYVQLWLV). Residues 68–79 (LRYRHKRLSYQS) lie on the Cytoplasmic side of the membrane. A helical membrane pass occupies residues 80–100 (VFLFLCLFWASLRTVLFSFYF). Over 101 to 111 (KDFVAANSLSP) the chain is Lumenal. The chain crosses the membrane as a helical span at residues 112–132 (FVFWLLYCFPVCLQFFTLTLM). Residues 133–159 (NLYFTQVIFKAKSKYSPELLKYRLPLY) are Cytoplasmic-facing. A helical membrane pass occupies residues 160–180 (LASLFISLVFLLVNLTCAVLV). Topologically, residues 181 to 188 (KTGNWERK) are lumenal. A helical membrane pass occupies residues 189–209 (VIVSVRVAINDTLFVLCAVSL). Over 210–237 (SICLYKISKMSLANIYLESKGSSVCQVT) the chain is Cytoplasmic. A helical membrane pass occupies residues 238-258 (AIGVTVILLYTSRACYNLFIL). The Lumenal segment spans residues 259-292 (SFSQNKSVHSFDYDWYNVSDQADLKNQLGDAGYV). N-linked (GlcNAc...) asparagine glycosylation is found at asparagine 263 and asparagine 275. The helical transmembrane segment at 293-313 (LFGVVLFVWELLPTTLVVYFF) threads the bilayer. Over 314–399 (RVRNPTKDLT…TLDPDKPSLG (86 aa)) the chain is Cytoplasmic.

The protein belongs to the GPR137 family. Interaction with RRAGA; increases RRAGA recruitment to lysosomes. Interacts with MTOR; this interaction is amino acid sensitive. As to expression, expressed in kidney, heart, brain and placenta.

It is found in the lysosome membrane. Functionally, lysosomal integral membrane protein that regulates the localization and activity of mTORC1, a signaling complex promoting cell growth in response to growth factors, energy levels, and amino acids. Interacts with Rag GTPases and increases the lysosomial localization and activity of Rag GTPases and thereby regulates mTORC1 translocation and activity in lysosome. Involved in the regulation of lysosomal morphology and autophagy. In terms of biological role, also acts as a negative regulator of osteoclast activity. Involved in interleukin-4-induced M2 macrophage polarization. This chain is Integral membrane protein GPR137B (GPR137B), found in Homo sapiens (Human).